A 366-amino-acid polypeptide reads, in one-letter code: Gelsolin-like protein 2 (366 aa).

3 Gelsolin-like repeats span residues 55–139 (NFKV…DLFL), 177–252 (KHIV…HEFY), and 286–327 (KSTV…AQEK). An actin binding region spans residues 100–116 (KSTQDEYCVAAYKTVEL). Positions 104-107 (DEYC) are actin-actin interfilament contact point.

It belongs to the villin/gelsolin family. As to quaternary structure, interacts with actin monomers and filaments. As to expression, expressed in circular and longitudinal muscle, pseudohearts, pharynx and gizzard. Not expressed in seminal vesicles.

It localises to the cytoplasm. It is found in the cytoskeleton. Its function is as follows. Calcium-regulated protein that binds to the plus (or barbed) ends of actin monomers or filaments, preventing monomer exchange (end-blocking or capping). Can promote the assembly of monomers into filaments (nucleation) as well as sever existing filaments. This is Gelsolin-like protein 2 from Lumbricus terrestris (Common earthworm).